Here is a 400-residue protein sequence, read N- to C-terminus: 3-hydroxykynurenine transaminase (400 aa).

The interval 43 to 44 is binds to and confers specificity for 3-hydroxykynurenine; shared with dimeric partner; the sequence is SN. Residues 77–79, S154, and Q204 contribute to the pyridoxal 5'-phosphate site; that span reads SAH. S154 serves as a coordination point for substrate. K205 bears the N6-(pyridoxal phosphate)lysine mark. 2 residues coordinate pyridoxal 5'-phosphate: Y256 and T259. R356 contacts substrate.

This sequence belongs to the class-V pyridoxal-phosphate-dependent aminotransferase family. In terms of assembly, homodimer. May form homotetramer. The cofactor is pyridoxal 5'-phosphate.

It localises to the peroxisome. The enzyme catalyses glyoxylate + L-alanine = glycine + pyruvate. The catalysed reaction is L-kynurenine + glyoxylate = kynurenate + glycine + H2O. It carries out the reaction 3-hydroxy-L-kynurenine + glyoxylate = xanthurenate + glycine + H2O. It catalyses the reaction 3-hydroxy-L-kynurenine + pyruvate = xanthurenate + L-alanine + H2O. The enzyme catalyses L-kynurenine + pyruvate = kynurenate + L-alanine + H2O. The catalysed reaction is 2-oxobutanoate + L-alanine = (2S)-2-aminobutanoate + pyruvate. It carries out the reaction L-phenylalanine + pyruvate = 3-phenylpyruvate + L-alanine. It catalyses the reaction L-serine + pyruvate = 3-hydroxypyruvate + L-alanine. The enzyme catalyses L-cysteine + pyruvate = 2-oxo-3-sulfanylpropanoate + L-alanine. The catalysed reaction is 3-hydroxy-L-kynurenine + oxaloacetate = 4-(2-amino-3-hydroxyphenyl)-2,4-dioxobutanoate + L-aspartate. It carries out the reaction 3-hydroxy-L-kynurenine + 3-phenylpyruvate = 4-(2-amino-3-hydroxyphenyl)-2,4-dioxobutanoate + L-phenylalanine. It catalyses the reaction L-kynurenine + oxaloacetate = 4-(2-aminophenyl)-2,4-dioxobutanoate + L-aspartate. The enzyme catalyses 3-phenylpyruvate + L-kynurenine = 4-(2-aminophenyl)-2,4-dioxobutanoate + L-phenylalanine. The protein operates within amino-acid degradation; L-kynurenine degradation; kynurenate from L-kynurenine: step 1/2. Functionally, catalyzes the pyridoxal 5'-phosphate-dependent transamination of both 3-hydroxykynurenine and L-kynurenine to xanthurenic acid and kynurenic acid, respectively, preferentially using the alpha-ketoacid pyruvate, glyoxylate or oxaloacetate as the amino group acceptor. The affinity and catalytic efficiency for 3-hydroxykynurenine is higher than for L-kynurenine. Involved in the detoxification of cytotoxic metabolite 3-hydroxykynurenine generated by the hydroxylation of L-kynurenine, an intermediate in the tryptophan catabolism pathway. Also catalyzes, although with a lesser efficiency, the transamination of alanine with glyoxylate as an amino group acceptor. May play a role in the detoxification of glyoxylate, a toxic plant metabolite from the diet. This Aedes aegypti (Yellowfever mosquito) protein is 3-hydroxykynurenine transaminase.